Here is a 574-residue protein sequence, read N- to C-terminus: Septation ring formation regulator EzrA (574 aa).

Over 1-7 (MSSGIIL) the chain is Extracellular. Residues 8–26 (LIVAIVLLVIIAYLVGVII) traverse the membrane as a helical segment. Over 27–574 (RKRNDSLITS…YEKTREHIRF (548 aa)) the chain is Cytoplasmic. 3 coiled-coil regions span residues 102–141 (NFIRAKHEINSVESQLNLVEEDIASIREALNILKEQEEKN), 274–350 (ELVT…ETES), and 459–520 (QLEA…SFEA).

It belongs to the EzrA family.

The protein localises to the cell membrane. Negative regulator of FtsZ ring formation; modulates the frequency and position of FtsZ ring formation. Inhibits FtsZ ring formation at polar sites. Interacts either with FtsZ or with one of its binding partners to promote depolymerization. The protein is Septation ring formation regulator EzrA of Streptococcus pyogenes serotype M1.